Consider the following 477-residue polypeptide: Glycogen synthase (477 aa).

Lys-15 contacts ADP-alpha-D-glucose.

Belongs to the glycosyltransferase 1 family. Bacterial/plant glycogen synthase subfamily.

It catalyses the reaction [(1-&gt;4)-alpha-D-glucosyl](n) + ADP-alpha-D-glucose = [(1-&gt;4)-alpha-D-glucosyl](n+1) + ADP + H(+). Its pathway is glycan biosynthesis; glycogen biosynthesis. Its function is as follows. Synthesizes alpha-1,4-glucan chains using ADP-glucose. The protein is Glycogen synthase of Citrobacter koseri (strain ATCC BAA-895 / CDC 4225-83 / SGSC4696).